The chain runs to 329 residues: Cathepsin K (329 aa).

The N-terminal stretch at 1-15 (MWGLKVLLLPVVSFA) is a signal peptide. Residues 16–114 (LYPEEILDTH…TLYIPEWEGR (99 aa)) constitute a propeptide, activation peptide. The N-linked (GlcNAc...) asparagine glycan is linked to asparagine 103. Intrachain disulfides connect cysteine 136–cysteine 177, cysteine 170–cysteine 210, and cysteine 269–cysteine 318. The active site involves cysteine 139. Active-site residues include histidine 276 and asparagine 296.

The protein belongs to the peptidase C1 family. In terms of tissue distribution, predominantly expressed in osteoclasts (bones). Expressed in thyroid epithelial cells.

It is found in the lysosome. Its subcellular location is the secreted. It localises to the apical cell membrane. It carries out the reaction Broad proteolytic activity. With small-molecule substrates and inhibitors, the major determinant of specificity is P2, which is preferably Leu, Met &gt; Phe, and not Arg.. Thiol protease involved in osteoclastic bone resorption and may participate partially in the disorder of bone remodeling. Displays potent endoprotease activity against fibrinogen at acid pH. May play an important role in extracellular matrix degradation. Involved in the release of thyroid hormone thyroxine (T4) by limited proteolysis of TG/thyroglobulin in the thyroid follicle lumen. In Homo sapiens (Human), this protein is Cathepsin K (CTSK).